The sequence spans 150 residues: Phosphopantetheine adenylyltransferase (150 aa).

Thr-15 contacts substrate. ATP-binding positions include 15–16 (TF) and His-23. Ile-80 and Arg-94 together coordinate substrate. ATP-binding positions include 95–97 (GIR), Glu-105, and 130–136 (LENISSR).

Belongs to the bacterial CoaD family. Homohexamer. The cofactor is Mg(2+).

Its subcellular location is the cytoplasm. It carries out the reaction (R)-4'-phosphopantetheine + ATP + H(+) = 3'-dephospho-CoA + diphosphate. Its pathway is cofactor biosynthesis; coenzyme A biosynthesis; CoA from (R)-pantothenate: step 4/5. In terms of biological role, reversibly transfers an adenylyl group from ATP to 4'-phosphopantetheine, yielding dephospho-CoA (dPCoA) and pyrophosphate. The protein is Phosphopantetheine adenylyltransferase of Malacoplasma penetrans (strain HF-2) (Mycoplasma penetrans).